Reading from the N-terminus, the 153-residue chain is uncharacterized protein (153 aa).

It belongs to the RusA family.

This is an uncharacterized protein from Xylella fastidiosa (strain Temecula1 / ATCC 700964).